We begin with the raw amino-acid sequence, 256 residues long: CD209 antigen-like protein 2 (256 aa).

The Cytoplasmic segment spans residues 1 to 50 (MSDSKEPRAQPLGLLEEEELITSSMNFFPRDFGFRQTRGYKSLAGCLGHA). The short motif at 14-15 (LL) is the Endocytosis signal element. Residues 51–71 (PLVLPLLFFTLFTGLLVAILV) form a helical; Signal-anchor for type II membrane protein membrane-spanning segment. Topologically, residues 72–240 (QVSKNPSSQR…KSAASCSRDE (169 aa)) are extracellular. 3 disulfide bridges follow: Cys-108–Cys-119, Cys-136–Cys-229, and Cys-208–Cys-221. Residues 114-230 (FFQGNCYFIS…CSAAKFWICK (117 aa)) form the C-type lectin domain. Ca(2+) contacts are provided by Glu-199, Asn-201, Ile-203, Glu-206, Asn-217, and Asp-218.

Predominantly expressed in liver and axillary lymph nodes. At very low levels also found in other tissues.

It is found in the membrane. Its function is as follows. Probable pathogen-recognition receptor involved in peripheral immune surveillance in liver. May mediate the endocytosis of pathogens which are subsequently degraded in lysosomal compartments. Probably recognizes in a calcium-dependent manner high mannose N-linked oligosaccharides in a variety of pathogen antigens. Is a receptor for ICAM3, probably by binding to mannose-like carbohydrates. This chain is CD209 antigen-like protein 2 (CD209L2), found in Macaca mulatta (Rhesus macaque).